Here is a 368-residue protein sequence, read N- to C-terminus: Alanine racemase (368 aa).

Lysine 34 serves as the catalytic Proton acceptor; specific for D-alanine. Residue lysine 34 is modified to N6-(pyridoxal phosphate)lysine. Arginine 132 is a binding site for substrate. The Proton acceptor; specific for L-alanine role is filled by tyrosine 261. Position 309 (methionine 309) interacts with substrate.

It belongs to the alanine racemase family. The cofactor is pyridoxal 5'-phosphate.

It carries out the reaction L-alanine = D-alanine. The protein operates within amino-acid biosynthesis; D-alanine biosynthesis; D-alanine from L-alanine: step 1/1. In terms of biological role, catalyzes the interconversion of L-alanine and D-alanine. May also act on other amino acids. The polypeptide is Alanine racemase (alr) (Carboxydothermus hydrogenoformans (strain ATCC BAA-161 / DSM 6008 / Z-2901)).